The following is a 147-amino-acid chain: Ribosomal RNA large subunit methyltransferase H (147 aa).

S-adenosyl-L-methionine is bound by residues L66, G95, and 114–119 (LSELTF).

It belongs to the RNA methyltransferase RlmH family. As to quaternary structure, homodimer.

Its subcellular location is the cytoplasm. It carries out the reaction pseudouridine(1915) in 23S rRNA + S-adenosyl-L-methionine = N(3)-methylpseudouridine(1915) in 23S rRNA + S-adenosyl-L-homocysteine + H(+). Functionally, specifically methylates the pseudouridine at position 1915 (m3Psi1915) in 23S rRNA. The polypeptide is Ribosomal RNA large subunit methyltransferase H (Synechococcus sp. (strain RCC307)).